Here is a 340-residue protein sequence, read N- to C-terminus: Complement decay-accelerating factor (340 aa).

4 Sushi domains span residues Val-1–Arg-55, Ser-56–Lys-119, Lys-120–Glu-181, and Ile-182–Gly-244. A disulfide bridge links Cys-24 with Cys-53. N-linked (GlcNAc...) asparagine glycosylation is present at Asn-54. 6 cysteine pairs are disulfide-bonded: Cys-57/Cys-104, Cys-88/Cys-117, Cys-122/Cys-163, Cys-149/Cys-179, Cys-184/Cys-226, and Cys-212/Cys-242. Asn-107 carries N-linked (GlcNAc...) asparagine glycosylation. The segment at Trp-235 to Leu-317 is disordered. Over residues Ser-246–Val-268 the composition is skewed to polar residues. Low complexity-rich tracts occupy residues Ser-269–Thr-287 and Gly-307–Leu-317. Residue Ser-312 is the site of GPI-anchor amidated serine attachment. A propeptide spans Gly-313–Thr-340 (removed in mature form).

Belongs to the receptors of complement activation (RCA) family. In terms of assembly, monomer (major form) and non-disulfide-linked, covalent homodimer (minor form). Interacts with ADGRE5. Post-translationally, the Ser/Thr-rich domain is heavily O-glycosylated.

The protein resides in the cell membrane. Its function is as follows. This protein recognizes C4b and C3b fragments that condense with cell-surface hydroxyl or amino groups when nascent C4b and C3b are locally generated during C4 and c3 activation. Interaction of daf with cell-associated C4b and C3b polypeptides interferes with their ability to catalyze the conversion of C2 and factor B to enzymatically active C2a and Bb and thereby prevents the formation of C4b2a and C3bBb, the amplification convertases of the complement cascade. Inhibits complement activation by destabilizing and preventing the formation of C3 and C5 convertases, which prevents complement damage. The protein is Complement decay-accelerating factor (CD55) of Pongo pygmaeus (Bornean orangutan).